A 119-amino-acid chain; its full sequence is Large ribosomal subunit protein bL20 (119 aa).

This sequence belongs to the bacterial ribosomal protein bL20 family.

In terms of biological role, binds directly to 23S ribosomal RNA and is necessary for the in vitro assembly process of the 50S ribosomal subunit. It is not involved in the protein synthesizing functions of that subunit. This is Large ribosomal subunit protein bL20 from Verminephrobacter eiseniae (strain EF01-2).